Reading from the N-terminus, the 236-residue chain is Serine/arginine-rich SC35-like splicing factor SCL28 (236 aa).

Disordered regions lie at residues 1-53 (MARA…LIRN) and 124-219 (EENR…RVLT). Over residues 14-43 (RPRDRSPPRERKGYDDNRLRERPSSRDHES) the composition is skewed to basic and acidic residues. Positions 47 to 125 (SGLLIRNLPL…REIAIVFAEE (79 aa)) constitute an RRM domain. Residues 149–176 (TSHRSPRRRYRSHSRSRSPPRRESRHSK) show a composition bias toward basic residues. Serine 184 carries the post-translational modification Phosphoserine. Residues 199-217 (RNEREYKSRNCRSPREERV) show a composition bias toward basic and acidic residues.

The protein belongs to the splicing factor SR family. SCL subfamily. As to quaternary structure, component of the spliceosome. Interacts with RS2Z33, CYP59, CYP63 and CYP95.

It localises to the nucleus speckle. Functionally, involved in intron recognition and spliceosome assembly. Probably active at the 5' splice sites. The sequence is that of Serine/arginine-rich SC35-like splicing factor SCL28 (SCL28) from Arabidopsis thaliana (Mouse-ear cress).